We begin with the raw amino-acid sequence, 654 residues long: U-box domain-containing protein 12 (654 aa).

Positions 255-329 (IPPEEFRCPI…AQWCESNGIE (75 aa)) constitute a U-box domain. The tract at residues 329 to 352 (EPPKRPNISQPSSKASSSSSAPDD) is disordered. Residues 337 to 349 (SQPSSKASSSSSA) show a composition bias toward low complexity. 5 ARM repeats span residues 387–427 (NHNR…NLSI), 430–469 (ENKG…SLSV), 471–510 (DENK…NLCI), 512–551 (QGNK…ILSS), and 553–592 (PDGK…HLCS).

The enzyme catalyses S-ubiquitinyl-[E2 ubiquitin-conjugating enzyme]-L-cysteine + [acceptor protein]-L-lysine = [E2 ubiquitin-conjugating enzyme]-L-cysteine + N(6)-ubiquitinyl-[acceptor protein]-L-lysine.. The protein operates within protein modification; protein ubiquitination. Its function is as follows. Functions as an E3 ubiquitin ligase. The polypeptide is U-box domain-containing protein 12 (PUB12) (Arabidopsis thaliana (Mouse-ear cress)).